A 146-amino-acid polypeptide reads, in one-letter code: Small ribosomal subunit protein eS19 (146 aa).

This sequence belongs to the eukaryotic ribosomal protein eS19 family.

This is Small ribosomal subunit protein eS19 (RPS19A) from Oryza sativa subsp. japonica (Rice).